A 458-amino-acid polypeptide reads, in one-letter code: UDP-N-acetylmuramoylalanine--D-glutamate ligase (458 aa).

Residue 124–130 (GSDGKTT) participates in ATP binding.

Belongs to the MurCDEF family.

Its subcellular location is the cytoplasm. The enzyme catalyses UDP-N-acetyl-alpha-D-muramoyl-L-alanine + D-glutamate + ATP = UDP-N-acetyl-alpha-D-muramoyl-L-alanyl-D-glutamate + ADP + phosphate + H(+). Its pathway is cell wall biogenesis; peptidoglycan biosynthesis. Functionally, cell wall formation. Catalyzes the addition of glutamate to the nucleotide precursor UDP-N-acetylmuramoyl-L-alanine (UMA). This Clostridium perfringens (strain 13 / Type A) protein is UDP-N-acetylmuramoylalanine--D-glutamate ligase.